The chain runs to 148 residues: Deoxyuridine 5'-triphosphate nucleotidohydrolase (148 aa).

Residues 67 to 69, asparagine 80, 84 to 86, and methionine 94 contribute to the substrate site; these read RSG and LID.

It belongs to the dUTPase family. Requires Mg(2+) as cofactor.

The enzyme catalyses dUTP + H2O = dUMP + diphosphate + H(+). It functions in the pathway pyrimidine metabolism; dUMP biosynthesis; dUMP from dCTP (dUTP route): step 2/2. Functionally, this enzyme is involved in nucleotide metabolism: it produces dUMP, the immediate precursor of thymidine nucleotides and it decreases the intracellular concentration of dUTP so that uracil cannot be incorporated into DNA. This is Deoxyuridine 5'-triphosphate nucleotidohydrolase from Ralstonia pickettii (strain 12J).